A 245-amino-acid chain; its full sequence is Alanyl-tRNA editing protein AlaX-M (245 aa).

Residues His107, His111, Cys210, and His214 each coordinate Zn(2+).

This sequence belongs to the class-II aminoacyl-tRNA synthetase family. Editing domain AlaX-M subfamily. The cofactor is Zn(2+).

It is found in the cytoplasm. Functions in trans to edit the amino acid moiety from mischarged charged tRNA(Ala). This is Alanyl-tRNA editing protein AlaX-M (alaXM) from Methanosarcina acetivorans (strain ATCC 35395 / DSM 2834 / JCM 12185 / C2A).